Reading from the N-terminus, the 115-residue chain is MNLFIMLTMSSITVSIVVALNLLTAKTSPDPEKLSPYECGFDPLGSARLPLSIRFFMVGILFLLFDLEIAILLPLTWAIHTLNPLKTITWAIIIFLFLFIGLAYEWLQGGLEWAE.

3 consecutive transmembrane segments (helical) span residues 3–23, 55–75, and 87–107; these read LFIMLTMSSITVSIVVALNLL, FFMVGILFLLFDLEIAILLPL, and TITWAIIIFLFLFIGLAYEWL.

The protein belongs to the complex I subunit 3 family.

It localises to the mitochondrion membrane. The catalysed reaction is a ubiquinone + NADH + 5 H(+)(in) = a ubiquinol + NAD(+) + 4 H(+)(out). Its function is as follows. Core subunit of the mitochondrial membrane respiratory chain NADH dehydrogenase (Complex I) that is believed to belong to the minimal assembly required for catalysis. Complex I functions in the transfer of electrons from NADH to the respiratory chain. The immediate electron acceptor for the enzyme is believed to be ubiquinone. The sequence is that of NADH-ubiquinone oxidoreductase chain 3 (MT-ND3) from Alligator mississippiensis (American alligator).